Here is a 646-residue protein sequence, read N- to C-terminus: Preterminal protein (646 aa).

The Nuclear localization signal motif lies at 357–366 (RLPVRRRRRR). Ser-555 bears the O-(5'-phospho-DNA)-serine mark. The disordered stretch occupies residues 619 to 646 (LHADVPLPPLQANPHPPLPPDARPQRTM). Residues 624–640 (PLPPLQANPHPPLPPDA) are compositionally biased toward pro residues.

It belongs to the adenoviridae terminal protein family. As to quaternary structure, heterodimer with the polymerase; this heterodimer binds to bp 9 to 18 of the genome. Interacts with host POU2F1; POU2F1 binds to the auxiliary sequences in the inverted terminal repeats and tethers the pTP-POL heterodimer to the origin DNA thereby participating in the assembly of the pre-initiation complex (POL-TP-DBP-NFIA-POU2F1). Preterminal protein is used to replicate viral genome, upon genomic encapsidation it is processed first into iTP and finally into TP by adenovirus protease.

It localises to the host nucleus matrix. Protein covalently bound to the viral DNA that acts as a primer for viral genomic replication by DNA strand displacement. Assembles on the viral origin of replication in an initiation complex with viral polymerase, DBP, host NFIA and host POU2F1/OCT1. During initiation, the polymerase covalently couples the first dCTP with Ser-580 of pTP. The terminal protein stimulates the template activity over 20 fold compared to protein-free templates. Neo-synthesized viral genomes are linked to two preterminal proteins, one for each 5' end. These new genomes are encapsidated in the nucleus, and during capsid maturation by viral protease, preterminal protein is first cleaved into intermediary (iTP), then into mature TP. May play a role in host nuclear matrix localization of genomic DNA. The chain is Preterminal protein from Homo sapiens (Human).